A 1299-amino-acid chain; its full sequence is Protein prickle (1299 aa).

Residues 1–19 are compositionally biased toward gly residues; that stretch reads MSSLSTGGGAGGSSGGPGG. Disordered stretches follow at residues 1 to 24, 115 to 181, 241 to 289, 368 to 396, and 425 to 527; these read MSSLSTGGGAGGSSGGPGGADAAA, ADDG…EVTQ, EEES…PQVP, LPRHFSPSGQGLATPPALGSGGMGLPSSS, and LPPH…DDDS. The span at 145-159 shows a compositional bias: basic residues; it reads SPRRSKKLLRSLRAH. The span at 168–181 shows a compositional bias: polar residues; that stretch reads NDTTTANESSEVTQ. Residues 263–272 are compositionally biased toward pro residues; that stretch reads PVPPLPPPPA. Residues 425–434 are compositionally biased toward low complexity; that stretch reads LPPHHQQHPG. Residues 435-445 show a composition bias toward gly residues; sequence AGMGPGPGSGA. Positions 457–469 are enriched in polar residues; that stretch reads PGCSANPKYSNAQ. The PET domain maps to 515–623; that stretch reads MDMQRQSHSD…NVRQLMSARP (109 aa). A compositionally biased stretch (basic and acidic residues) spans 516-525; the sequence is DMQRQSHSDD. 3 consecutive LIM zinc-binding domains span residues 622–686, 687–747, and 748–810; these read RPCD…ETLK, PRCS…MFAE, and YCDY…GEPP. Disordered stretches follow at residues 807-865, 902-940, and 1026-1249; these read GEPP…HQAT, KDLEHGGHMGGGDLTDFSGGRASSTSQNLSPLNSPGDFQ, and ADIL…SSSS. A compositionally biased stretch (low complexity) spans 844-864; sequence PSSHASSSPPMSPQQQQQHQA. 2 stretches are compositionally biased toward polar residues: residues 922 to 934 and 1070 to 1081; these read RASSTSQNLSPLN and SLNTPMSTQSAS. The span at 1089-1101 shows a compositional bias: low complexity; sequence SILSGASSSSPMS. Basic and acidic residues predominate over residues 1136-1150; the sequence is GERERDRDKDKEGGG. The segment covering 1151-1183 has biased composition (basic residues); it reads RHGHGHSSRRRRRRKSSSSSSHHRSGSGHRSHS. The span at 1216–1231 shows a compositional bias: basic and acidic residues; sequence SPSRQQRERERERERE. Residues 1238 to 1249 are compositionally biased toward low complexity; sequence VCSTCSSSSSSS.

It belongs to the prickle / espinas / testin family. As to quaternary structure, interacts with dsh; PET and LIM domains interact with dsh DEP domain, in wing cells. Interacts with Vang in photoreceptor cells. As to expression, expressed in the wing, leg and eye imaginal disks. Expressed within the photoreceptors of the eye.

It is found in the cell membrane. Functionally, acts in a planar cell polarity (PCP) complex; polarization along the apical/basal axis of epithelial cells. Correct expression of the alternative isoforms is required for PCP signaling in imaginal disks. PCP signaling in the wing disk requires the receptor fz and the cytoplasmic proteins dsh and pk. These act in a feedback loop leading to activation of the jnk cascade and subsequent polarized arrangement of hairs and bristles. Dgo and pk compete with one another for dsh binding, thereby modulating fz dsh activity and ensuring tight control over fz PCP signaling. Vang, stan and pk function together to regulate the establishment of tissue polarity in the adult eye. In Drosophila melanogaster (Fruit fly), this protein is Protein prickle.